The chain runs to 149 residues: Probable flagellum biosynthesis repressor protein FlbT (149 aa).

It belongs to the FlbT family.

In terms of biological role, has a post-transcriptional repressor function in flagellum biogenesis. Associates with the 5'-UTR of fljK mRNA and promotes its degradation. This chain is Probable flagellum biosynthesis repressor protein FlbT, found in Rhizobium leguminosarum bv. trifolii (strain WSM2304).